Here is a 372-residue protein sequence, read N- to C-terminus: Lysophosphatidic acid receptor 5 (372 aa).

Residues 1–30 (MFANSSANTTSTNSSVLQCPDYRDTHRLHM) lie on the Extracellular side of the membrane. Residues asparagine 4, asparagine 8, and asparagine 13 are each glycosylated (N-linked (GlcNAc...) asparagine). A helical transmembrane segment spans residues 31–51 (VVYSLVLATGLPLNALALWVF). Over 52–59 (LRVLRVHS) the chain is Cytoplasmic. A helical membrane pass occupies residues 60 to 80 (VVSVYMCNLAASDLLFTLSLP). Residues 81 to 100 (LRLSYYAQHHWPFPGFLCQT) are Extracellular-facing. A disulfide bond links cysteine 98 and cysteine 179. A helical transmembrane segment spans residues 101–121 (SGAIFQMNMYGSCLFLMLINV). Residues 122–140 (DRYAAIVHPLRLRHLRRPR) lie on the Cytoplasmic side of the membrane. Residues 141 to 161 (VARRLCLGVWALILLFAVPAA) traverse the membrane as a helical segment. The Extracellular portion of the chain corresponds to 162-191 (RVHSPSHCTYKNITVRLCFESFSDELWKGR). An N-linked (GlcNAc...) asparagine glycan is attached at asparagine 173. A helical transmembrane segment spans residues 192–212 (LLPLLLLAEILGFLLPLAAVV). The Cytoplasmic portion of the chain corresponds to 213–243 (YSSGRVFWTLARPDATQSQRRRKTVRLLLAN). A helical transmembrane segment spans residues 244–264 (LIIFLLCFVPYNSTLAVYGLL). The Extracellular portion of the chain corresponds to 265–280 (RANLVKNSIQDRDQVR). Residues 281–301 (GVLMIMVLLAGANCVLDPLVY) form a helical membrane-spanning segment. Over 302 to 372 (YFSAEGFRNT…PDNCSQDSAL (71 aa)) the chain is Cytoplasmic.

It belongs to the G-protein coupled receptor 1 family.

It localises to the cell membrane. Its function is as follows. Receptor for lysophosphatidic acid (LPA), a mediator of diverse cellular activities. The polypeptide is Lysophosphatidic acid receptor 5 (Lpar5) (Mus musculus (Mouse)).